Here is a 407-residue protein sequence, read N- to C-terminus: Putative polysaccharide ligase RF_0568 (407 aa).

10 consecutive transmembrane segments (helical) span residues 15–35 (LGMV…LMLF), 71–91 (MTIK…LFAI), 100–120 (FIQV…VPFG), 129–149 (LILG…SHGF), 166–186 (GCAL…SSGK), 203–223 (ISDS…FILA), 229–249 (IFFK…PVIA), 272–292 (LFIW…GYGF), 324–344 (ILQI…CLVY), and 379–399 (IWQI…KLLV).

It belongs to the O-antigen ligase family.

It is found in the membrane. The protein is Putative polysaccharide ligase RF_0568 of Rickettsia felis (strain ATCC VR-1525 / URRWXCal2) (Rickettsia azadi).